The chain runs to 115 residues: Large ribosomal subunit protein bL19 (115 aa).

It belongs to the bacterial ribosomal protein bL19 family.

Its function is as follows. This protein is located at the 30S-50S ribosomal subunit interface and may play a role in the structure and function of the aminoacyl-tRNA binding site. This Desulforamulus reducens (strain ATCC BAA-1160 / DSM 100696 / MI-1) (Desulfotomaculum reducens) protein is Large ribosomal subunit protein bL19.